Here is a 352-residue protein sequence, read N- to C-terminus: Ion-translocating oxidoreductase complex subunit D (352 aa).

4 helical membrane-spanning segments follow: residues Ile20–Gly40, Gly42–Leu62, Ile89–Ala109, and Pro123–Leu143. Thr187 is subject to FMN phosphoryl threonine. 5 helical membrane-spanning segments follow: residues Ile214 to Leu234, Trp242 to Phe262, Leu267 to Leu287, Leu301 to Pro321, and Asp322 to Thr342.

The protein belongs to the NqrB/RnfD family. In terms of assembly, the complex is composed of six subunits: RsxA, RsxB, RsxC, RsxD, RsxE and RsxG. FMN is required as a cofactor.

It is found in the cell inner membrane. Part of a membrane-bound complex that couples electron transfer with translocation of ions across the membrane. Required to maintain the reduced state of SoxR. The protein is Ion-translocating oxidoreductase complex subunit D of Escherichia coli O17:K52:H18 (strain UMN026 / ExPEC).